The following is a 231-amino-acid chain: LexA repressor (231 aa).

Positions 26 to 46 form a DNA-binding region, H-T-H motif; the sequence is FDEMKDALDLRSKSGIHRLIT. Residues S152 and K190 each act as for autocatalytic cleavage activity in the active site.

The protein belongs to the peptidase S24 family. As to quaternary structure, homodimer.

The catalysed reaction is Hydrolysis of Ala-|-Gly bond in repressor LexA.. In terms of biological role, represses a number of genes involved in the response to DNA damage (SOS response), including recA and lexA. In the presence of single-stranded DNA, RecA interacts with LexA causing an autocatalytic cleavage which disrupts the DNA-binding part of LexA, leading to derepression of the SOS regulon and eventually DNA repair. In Dinoroseobacter shibae (strain DSM 16493 / NCIMB 14021 / DFL 12), this protein is LexA repressor.